The chain runs to 421 residues: D-amino acid dehydrogenase (421 aa).

4–18 (VLVLGSGVVGLTSAW) contacts FAD.

The protein belongs to the DadA oxidoreductase family. FAD serves as cofactor.

It catalyses the reaction a D-alpha-amino acid + A + H2O = a 2-oxocarboxylate + AH2 + NH4(+). Its function is as follows. Oxidative deamination of D-amino acids. The protein is D-amino acid dehydrogenase of Vibrio cholerae serotype O1 (strain ATCC 39315 / El Tor Inaba N16961).